The chain runs to 608 residues: Prolactin receptor (608 aa).

A signal peptide spans 1–19 (MSSALAYMLLVLSISLLNG). The Extracellular portion of the chain corresponds to 20–229 (QSPPGKPEIH…EIPNDFTLKD (210 aa)). Fibronectin type-III domains are found at residues 22 to 122 (PPGK…IVEP) and 124 to 224 (PPRN…IPND). Cysteines 31 and 41 form a disulfide. N-linked (GlcNAc...) asparagine glycosylation is present at asparagine 54. The cysteines at positions 70 and 81 are disulfide-linked. Asparagine 99 and asparagine 127 each carry an N-linked (GlcNAc...) asparagine glycan. Zn(2+)-binding residues include aspartate 206 and histidine 207. Residues 210–214 (WSRWG) carry the WSXWS motif motif. The helical transmembrane segment at 230 to 253 (TTVWIIVAVLSAVICLIMVWAVAL) threads the bilayer. At 254 to 608 (KGYSMMTCIF…DPTCFMHSFH (355 aa)) the chain is on the cytoplasmic side. Positions 262 to 270 (IFPPVPGPK) match the Box 1 motif motif. Disordered stretches follow at residues 317-355 (DERL…HSLL), 377-419 (KPEN…TRRS), and 466-487 (GAKS…EKGP). The span at 318–327 (ERLMPSHSKE) shows a compositional bias: basic and acidic residues. A compositionally biased stretch (low complexity) spans 345-354 (GHGSYDSHSL). Positions 398 to 408 (CHTDTSKSTTW) are enriched in polar residues.

It belongs to the type I cytokine receptor family. Type 1 subfamily. As to quaternary structure, interacts with SMARCA1. Interacts with NEK3 and VAV2 and this interaction is prolactin-dependent.

It is found in the membrane. In terms of biological role, this is a receptor for the anterior pituitary hormone prolactin. In Mus musculus (Mouse), this protein is Prolactin receptor (Prlr).